A 358-amino-acid chain; its full sequence is DNA polymerase IV (358 aa).

One can recognise a UmuC domain in the interval 4–185 (IIHVDMDCFY…LPLIKIPGVG (182 aa)). 2 residues coordinate Mg(2+): D8 and D103. E104 is a catalytic residue.

Belongs to the DNA polymerase type-Y family. As to quaternary structure, monomer. Requires Mg(2+) as cofactor.

The protein resides in the cytoplasm. The enzyme catalyses DNA(n) + a 2'-deoxyribonucleoside 5'-triphosphate = DNA(n+1) + diphosphate. In terms of biological role, poorly processive, error-prone DNA polymerase involved in untargeted mutagenesis. Copies undamaged DNA at stalled replication forks, which arise in vivo from mismatched or misaligned primer ends. These misaligned primers can be extended by PolIV. Exhibits no 3'-5' exonuclease (proofreading) activity. May be involved in translesional synthesis, in conjunction with the beta clamp from PolIII. The polypeptide is DNA polymerase IV (Shewanella halifaxensis (strain HAW-EB4)).